We begin with the raw amino-acid sequence, 527 residues long: Cytochrome P450 714B3 (527 aa).

Topologically, residues 1 to 14 (MEVAMAMAVKVLLS) are lumenal. The chain crosses the membrane as a helical; Signal-anchor for type III membrane protein span at residues 15–35 (LCCVGACGLAVYLYHILWLVP). Residues 36–527 (QKVLAKFEDQ…SVCTKRGTAI (492 aa)) are Cytoplasmic-facing. Cys-464 is a binding site for heme.

The protein belongs to the cytochrome P450 family. Heme is required as a cofactor.

It is found in the membrane. Its function is as follows. May be involved in gibberellin metabolism. This chain is Cytochrome P450 714B3 (CYP714B3), found in Zea mays (Maize).